The sequence spans 181 residues: Oligoribonuclease (181 aa).

In terms of domain architecture, Exonuclease spans 8–171 (LIWIDLEMTG…LDIQESIAEL (164 aa)). The active site involves Tyr129.

Belongs to the oligoribonuclease family.

It localises to the cytoplasm. Functionally, 3'-to-5' exoribonuclease specific for small oligoribonucleotides. This Shewanella amazonensis (strain ATCC BAA-1098 / SB2B) protein is Oligoribonuclease.